A 363-amino-acid chain; its full sequence is Hydroxycarboxylic acid receptor 2 (363 aa).

Topologically, residues 1 to 33 (MNRHHLQDHFLEIDKKNCCVFRDDFIVKVLPPV) are extracellular. A helical transmembrane segment spans residues 34 to 54 (LGLEFIFGLLGNGLALWIFCF). Topologically, residues 55–63 (HLKSWKSSR) are cytoplasmic. The chain crosses the membrane as a helical span at residues 64-84 (IFLFNLAVADFLLIICLPFLM). Residues 85-102 (DNYVRRWDWKFGDIPCRL) lie on the Extracellular side of the membrane. Cys100 and Cys177 form a disulfide bridge. The chain crosses the membrane as a helical span at residues 103–123 (MLFMLAMNRQGSIIFLTVVAV). At 124 to 142 (DRYFRVVHPHHALNKISNR) the chain is on the cytoplasmic side. A helical membrane pass occupies residues 143 to 163 (TAAIISCLLWGITIGLTVHLL). At 164–192 (KKKMPIQNGGANLCSSFSICHTFQWHEAM) the chain is on the extracellular side. Residues 193–213 (FLLEFFLPLGIILFCSARIIW) form a helical membrane-spanning segment. Topologically, residues 214–229 (SLRQRQMDRHAKIKRA) are cytoplasmic. The chain crosses the membrane as a helical span at residues 230-250 (ITFIMVVAIVFVICFLPSVVV). Residues 251–273 (RIRIFWLLHTSGTQNCEVYRSVD) are Extracellular-facing. Residues 274-294 (LAFFITLSFTYMNSMLDPVVY) traverse the membrane as a helical segment. The Cytoplasmic segment spans residues 295 to 363 (YFSSPSFPNF…SPSYLGPTSP (69 aa)). Residues 319-363 (GEPDNNRSTSVELTGDPNKTRGAPEALMANSGEPWSPSYLGPTSP) form a disordered region. Residue Ser328 is modified to Phosphoserine.

This sequence belongs to the G-protein coupled receptor 1 family. In terms of tissue distribution, expression largely restricted to adipose tissue and spleen. Expressed on mature neutrophils but not on immature neutrophils or eosinophils.

The protein resides in the cell membrane. Its function is as follows. Acts as a high affinity receptor for both nicotinic acid (also known as niacin) and (D)-beta-hydroxybutyrate and mediates increased adiponectin secretion and decreased lipolysis through G(i)-protein-mediated inhibition of adenylyl cyclase. This pharmacological effect requires nicotinic acid doses that are much higher than those provided by a normal diet. Mediates nicotinic acid-induced apoptosis in mature neutrophils. Receptor activation by nicotinic acid results in reduced cAMP levels which may affect activity of cAMP-dependent protein kinase A and phosphorylation of target proteins, leading to neutrophil apoptosis. The rank order of potency for the displacement of nicotinic acid binding is 5-methyl pyrazole-3-carboxylic acid = pyridine-3-acetic acid &gt; acifran &gt; 5-methyl nicotinic acid = acipimox &gt;&gt; nicotinuric acid = nicotinamide. The chain is Hydroxycarboxylic acid receptor 2 (HCAR2) from Homo sapiens (Human).